The following is a 600-amino-acid chain: NADH-quinone oxidoreductase subunit C/D (600 aa).

The NADH dehydrogenase I subunit C stretch occupies residues 1–190 (MVNNMTDLTA…DPFELTKAKQ (190 aa)). The interval 214–600 (DFMFLNLGPN…IDFVMSDVDR (387 aa)) is NADH dehydrogenase I subunit D.

This sequence in the N-terminal section; belongs to the complex I 30 kDa subunit family. It in the C-terminal section; belongs to the complex I 49 kDa subunit family. As to quaternary structure, NDH-1 is composed of 13 different subunits. Subunits NuoB, CD, E, F, and G constitute the peripheral sector of the complex.

It localises to the cell inner membrane. It catalyses the reaction a quinone + NADH + 5 H(+)(in) = a quinol + NAD(+) + 4 H(+)(out). Its function is as follows. NDH-1 shuttles electrons from NADH, via FMN and iron-sulfur (Fe-S) centers, to quinones in the respiratory chain. The immediate electron acceptor for the enzyme in this species is believed to be ubiquinone. Couples the redox reaction to proton translocation (for every two electrons transferred, four hydrogen ions are translocated across the cytoplasmic membrane), and thus conserves the redox energy in a proton gradient. The protein is NADH-quinone oxidoreductase subunit C/D of Salmonella paratyphi A (strain ATCC 9150 / SARB42).